A 510-amino-acid chain; its full sequence is NAD(P)H-quinone oxidoreductase subunit 2 A, chloroplastic (510 aa).

12 helical membrane passes run 24–44, 59–79, 99–119, 124–144, 149–169, 183–203, 229–249, 295–315, 323–343, 354–374, 395–415, and 418–438; these read LLLFNGSFIFPECILIFGLIL, WFYFISSTCLVISITALLFRW, IFQFLILLCSTLCIPLSVEYI, MAITEFLLFVLTATLGGMFLC, LITIFVAPECFSLCSYLLSGY, YLLMGGAGSSILVHGFSWLYG, ISLALISITVGLGFKLSPAPF, WHLLLEILAILSMILGNLLAI, MLAYSSIGQIGYVIIGIIVGD, YMLFYISMNLGTFACIVLFGL, ALSLALCLLSLGGLPPLAGFF, and LYLFWCGWQAGLYFLVSIGLL.

The protein belongs to the complex I subunit 2 family. NDH is composed of at least 16 different subunits, 5 of which are encoded in the nucleus.

The protein localises to the plastid. Its subcellular location is the chloroplast thylakoid membrane. The enzyme catalyses a plastoquinone + NADH + (n+1) H(+)(in) = a plastoquinol + NAD(+) + n H(+)(out). It carries out the reaction a plastoquinone + NADPH + (n+1) H(+)(in) = a plastoquinol + NADP(+) + n H(+)(out). NDH shuttles electrons from NAD(P)H:plastoquinone, via FMN and iron-sulfur (Fe-S) centers, to quinones in the photosynthetic chain and possibly in a chloroplast respiratory chain. The immediate electron acceptor for the enzyme in this species is believed to be plastoquinone. Couples the redox reaction to proton translocation, and thus conserves the redox energy in a proton gradient. The polypeptide is NAD(P)H-quinone oxidoreductase subunit 2 A, chloroplastic (Triticum aestivum (Wheat)).